The primary structure comprises 51 residues: Large ribosomal subunit protein eL39 (51 aa).

It belongs to the eukaryotic ribosomal protein eL39 family.

In Aeropyrum pernix (strain ATCC 700893 / DSM 11879 / JCM 9820 / NBRC 100138 / K1), this protein is Large ribosomal subunit protein eL39 (rpl39e).